A 271-amino-acid chain; its full sequence is Ribose-phosphate pyrophosphokinase 2 (271 aa).

Residues 34 to 36 (DGE) and 82 to 83 (RQ) each bind ATP. Mg(2+)-binding residues include His-115 and Asp-150. Residue Lys-173 is part of the active site. D-ribose 5-phosphate is bound by residues Arg-175, Asp-199, and 203 to 207 (STGGT).

Belongs to the ribose-phosphate pyrophosphokinase family. Class III (archaeal) subfamily. Mg(2+) is required as a cofactor.

The protein resides in the cytoplasm. It carries out the reaction D-ribose 5-phosphate + ATP = 5-phospho-alpha-D-ribose 1-diphosphate + AMP + H(+). The protein operates within metabolic intermediate biosynthesis; 5-phospho-alpha-D-ribose 1-diphosphate biosynthesis; 5-phospho-alpha-D-ribose 1-diphosphate from D-ribose 5-phosphate (route I): step 1/1. Functionally, involved in the biosynthesis of the central metabolite phospho-alpha-D-ribosyl-1-pyrophosphate (PRPP) via the transfer of pyrophosphoryl group from ATP to 1-hydroxyl of ribose-5-phosphate (Rib-5-P). This Archaeoglobus fulgidus (strain ATCC 49558 / DSM 4304 / JCM 9628 / NBRC 100126 / VC-16) protein is Ribose-phosphate pyrophosphokinase 2.